The sequence spans 486 residues: Zinc transporter 6 (486 aa).

Residues 1 to 60 are Cytoplasmic-facing; the sequence is MVALDVLGITDSDAPVYRQKQEADTLVLGTIHPFRKAHRSVLGKLAQEFRLVTSDRRSWK. A helical membrane pass occupies residues 61 to 81; that stretch reads ILLFGVLNVVCTGCLLMWCSS. The Extracellular segment spans residues 82 to 91; the sequence is TNSMALTAYT. Residues 92–112 form a helical membrane-spanning segment; that stretch reads YLTIFDLFSLITCLLSLWVTM. Residues 113 to 125 are Cytoplasmic-facing; that stretch reads KKPSQIYSFGFQR. Residues 126–146 form a helical membrane-spanning segment; sequence FEVLAVFSSTVLVQLGSLFIL. Residues 147-161 are Extracellular-facing; it reads KESVERFVEQPEVHT. Residues 162-182 traverse the membrane as a helical segment; it reads GRLLVGTFVALFFNLLTLLSV. Residues 183–227 are Cytoplasmic-facing; sequence KNKPFVFVSEAASTSWLQEHVADLSRSLCGLIPALSSFLLPRMNP. A helical transmembrane segment spans residues 228–248; it reads FVLINLAGAFALGITYMLIEI. Over 249 to 255 the chain is Extracellular; sequence NNYNAMD. The chain crosses the membrane as a helical span at residues 256–276; it reads TASAVAIALMTFGTMYPMSVY. The Cytoplasmic portion of the chain corresponds to 277–486; sequence SGKVLLQTTP…SGTYTGPPRP (210 aa). Residues 394-411 are compositionally biased toward low complexity; that stretch reads PSRAQGSEPTPATSTPAK. The tract at residues 394 to 425 is disordered; it reads PSRAQGSEPTPATSTPAKPSSPPPEFSFHTPG.

This sequence belongs to the cation diffusion facilitator (CDF) transporter (TC 2.A.4) family. SLC30A subfamily. Heterodimer with SLC30A5; form a functional zinc ion transmembrane transporter.

Its subcellular location is the golgi apparatus. It localises to the trans-Golgi network membrane. Functionally, has probably no intrinsic transporter activity but together with SLC30A5 forms a functional zinc ion:proton antiporter heterodimer, mediating zinc entry into the lumen of organelles along the secretory pathway. As part of that zinc ion:proton antiporter, contributes to zinc ion homeostasis within the early secretory pathway and regulates the activation and folding of enzymes like alkaline phosphatases and enzymes involved in phosphatidylinositol glycan anchor biosynthesis. The protein is Zinc transporter 6 (slc30a6) of Danio rerio (Zebrafish).